Here is a 165-residue protein sequence, read N- to C-terminus: Choriogonadotropin subunit beta 7 (165 aa).

The first 20 residues, 1 to 20 (MEMFQGLLLLLLLSMGGTWA), serve as a signal peptide directing secretion. 6 disulfides stabilise this stretch: Cys29–Cys77, Cys43–Cys92, Cys46–Cys130, Cys54–Cys108, Cys58–Cys110, and Cys113–Cys120. Asn33 and Asn50 each carry an N-linked (GlcNAc...) asparagine glycan. The disordered stretch occupies residues 131–165 (DDPRFQASSSSKAPPPSLPSPSRLPGPSDTPILPQ). Residues Ser141, Ser147, Ser152, and Ser158 are each glycosylated (O-linked (GalNAc...) serine). Pro residues predominate over residues 143–154 (APPPSLPSPSRL).

The protein belongs to the glycoprotein hormones subunit beta family. Heterodimer of a common alpha chain identical in LH, FSH, TSH and HCG and a unique beta chain distinct in each of the hormones and confers receptor and biological specificity. As to expression, high expression in the placenta throughout pregnancy.

The protein localises to the secreted. In terms of biological role, beta subunit of the human chorionic gonadotropin (hCG). hCG is a complex glycoprotein composed of two glycosylated subunits alpha and beta which are non-covalently associated. The alpha subunit is identical to those in the pituitary gonadotropin hormones (LH, FSH and TSH). The beta subunits are distinct in each of the hormones and confer receptor and biological specificity. Has an essential role for pregnancy and maternal adaptation. Stimulates the ovaries to synthesize the steroids that are essential for the maintenance of pregnancy. In Homo sapiens (Human), this protein is Choriogonadotropin subunit beta 7.